We begin with the raw amino-acid sequence, 415 residues long: Coenzyme F420 hydrogenase subunit alpha (415 aa).

Cys-68, Cys-71, Cys-391, and Cys-394 together coordinate Ni(2+).

The protein belongs to the [NiFe]/[NiFeSe] hydrogenase large subunit family. Heterocomplex of the form (alpha(1)beta(1)gamma(1))(8). Ni(2+) is required as a cofactor. The cofactor is iron-sulfur cluster. It depends on FAD as a cofactor.

It catalyses the reaction oxidized coenzyme F420-(gamma-L-Glu)(n) + H2 + H(+) = reduced coenzyme F420-(gamma-L-Glu)(n). In terms of biological role, reduces the physiological low-potential two-electron acceptor coenzyme F420, and the artificial one-electron acceptor methylviologen. The protein is Coenzyme F420 hydrogenase subunit alpha (frhA) of Methanocaldococcus jannaschii (strain ATCC 43067 / DSM 2661 / JAL-1 / JCM 10045 / NBRC 100440) (Methanococcus jannaschii).